A 74-amino-acid polypeptide reads, in one-letter code: Ferredoxin-like protein in nif region (74 aa).

The 4Fe-4S ferredoxin-type domain maps to 2–30; the sequence is PFKIIASQCTSCSACEPLCPNVAISEKGG. Residues C10, C13, C16, C20, C39, C51, and C55 each contribute to the [4Fe-4S] cluster site.

[4Fe-4S] cluster serves as cofactor.

The protein is Ferredoxin-like protein in nif region (frxA) of Bradyrhizobium diazoefficiens (strain JCM 10833 / BCRC 13528 / IAM 13628 / NBRC 14792 / USDA 110).